The sequence spans 131 residues: Large ribosomal subunit protein bL21 (131 aa).

The span at 106 to 116 shows a compositional bias: basic and acidic residues; sequence TIDDMPKKEAA. The segment at 106 to 131 is disordered; that stretch reads TIDDMPKKEAAPAKARRSTKKAAAAE.

Belongs to the bacterial ribosomal protein bL21 family. As to quaternary structure, part of the 50S ribosomal subunit. Contacts protein L20.

This protein binds to 23S rRNA in the presence of protein L20. The chain is Large ribosomal subunit protein bL21 from Koribacter versatilis (strain Ellin345).